We begin with the raw amino-acid sequence, 37 residues long: Esculentin-2SE (37 aa).

A disulfide bridge links Cys31 with Cys37.

In terms of tissue distribution, expressed by the skin glands.

Its subcellular location is the secreted. In terms of biological role, mast cell degranulating peptide. Causes histamine release from rat peritoneal mast cells in vitro. Has antibacterial activity against the Gram-negative bacterium E.coli K12 and Gram-positive bacterium M.luteus NCT C2665. This Lithobates sevosus (Dusky gopher frog) protein is Esculentin-2SE.